The primary structure comprises 466 residues: Phosphomethylpyrimidine synthase (466 aa).

Substrate is bound by residues N80, M109, Y139, H175, 195 to 197, 236 to 239, and E275; these read SRG and DSLR. H279 is a binding site for Zn(2+). Position 302 (Y302) interacts with substrate. H343 is a binding site for Zn(2+). 3 residues coordinate [4Fe-4S] cluster: C423, C426, and C431.

The protein belongs to the ThiC family. [4Fe-4S] cluster is required as a cofactor.

The catalysed reaction is 5-amino-1-(5-phospho-beta-D-ribosyl)imidazole + S-adenosyl-L-methionine = 4-amino-2-methyl-5-(phosphooxymethyl)pyrimidine + CO + 5'-deoxyadenosine + formate + L-methionine + 3 H(+). Its pathway is cofactor biosynthesis; thiamine diphosphate biosynthesis. In terms of biological role, catalyzes the synthesis of the hydroxymethylpyrimidine phosphate (HMP-P) moiety of thiamine from aminoimidazole ribotide (AIR) in a radical S-adenosyl-L-methionine (SAM)-dependent reaction. This Synechococcus sp. (strain RCC307) protein is Phosphomethylpyrimidine synthase.